Reading from the N-terminus, the 83-residue chain is Cytochrome b559 subunit alpha (83 aa).

The helical transmembrane segment at 21 to 35 (VIHSITIPSLFIAGW) threads the bilayer. Position 23 (His23) interacts with heme.

This sequence belongs to the PsbE/PsbF family. In terms of assembly, heterodimer of an alpha subunit and a beta subunit. PSII is composed of 1 copy each of membrane proteins PsbA, PsbB, PsbC, PsbD, PsbE, PsbF, PsbH, PsbI, PsbJ, PsbK, PsbL, PsbM, PsbT, PsbX, PsbY, PsbZ, Psb30/Ycf12, at least 3 peripheral proteins of the oxygen-evolving complex and a large number of cofactors. It forms dimeric complexes. Heme b serves as cofactor.

Its subcellular location is the plastid. The protein localises to the chloroplast thylakoid membrane. In terms of biological role, this b-type cytochrome is tightly associated with the reaction center of photosystem II (PSII). PSII is a light-driven water:plastoquinone oxidoreductase that uses light energy to abstract electrons from H(2)O, generating O(2) and a proton gradient subsequently used for ATP formation. It consists of a core antenna complex that captures photons, and an electron transfer chain that converts photonic excitation into a charge separation. The protein is Cytochrome b559 subunit alpha of Phalaenopsis aphrodite subsp. formosana (Moth orchid).